A 212-amino-acid polypeptide reads, in one-letter code: ATP-dependent dethiobiotin synthetase BioD (212 aa).

13–18 (GIGKTV) contacts ATP. A Mg(2+)-binding site is contributed by Thr-17. Residue Lys-33 is part of the active site. Ser-37 contributes to the substrate binding site. Glu-100 serves as a coordination point for Mg(2+). ATP-binding positions include 100–103 (EGAG) and 184–186 (PRL).

The protein belongs to the dethiobiotin synthetase family. As to quaternary structure, homodimer. Requires Mg(2+) as cofactor.

The protein localises to the cytoplasm. It catalyses the reaction (7R,8S)-7,8-diammoniononanoate + CO2 + ATP = (4R,5S)-dethiobiotin + ADP + phosphate + 3 H(+). Its pathway is cofactor biosynthesis; biotin biosynthesis; biotin from 7,8-diaminononanoate: step 1/2. Catalyzes a mechanistically unusual reaction, the ATP-dependent insertion of CO2 between the N7 and N8 nitrogen atoms of 7,8-diaminopelargonic acid (DAPA, also called 7,8-diammoniononanoate) to form a ureido ring. The chain is ATP-dependent dethiobiotin synthetase BioD from Rhodopseudomonas palustris (strain TIE-1).